A 478-amino-acid chain; its full sequence is Alpha-1,3-mannosyl-glycoprotein 4-beta-N-acetylglucosaminyltransferase C (478 aa).

Residues 1 to 23 (MFKFHQVKHIFEILDKMRCLRKR) lie on the Cytoplasmic side of the membrane. The helical; Signal-anchor for type II membrane protein transmembrane segment at 24–44 (FTVSFLGVLVIFLLFMNLYIE) threads the bilayer. Over 45–478 (DSYVLEGDKQ…IIRSISIWTS (434 aa)) the chain is Lumenal. Residues N84, N215, and N348 are each glycosylated (N-linked (GlcNAc...) asparagine).

This sequence belongs to the glycosyltransferase 54 family. A divalent metal cation is required as a cofactor.

It localises to the golgi apparatus membrane. It carries out the reaction N(4)-{beta-D-GlcNAc-(1-&gt;2)-alpha-D-Man-(1-&gt;3)-[beta-D-GlcNAc-(1-&gt;2)-alpha-D-Man-(1-&gt;6)]-beta-D-Man-(1-&gt;4)-beta-D-GlcNAc-(1-&gt;4)-beta-D-GlcNAc}-L-asparaginyl-[protein] + UDP-N-acetyl-alpha-D-glucosamine = N(4)-{beta-D-GlcNAc-(1-&gt;2)-[beta-D-GlcNAc-(1-&gt;4)]-alpha-D-Man-(1-&gt;3)-[beta-D-GlcNAc-(1-&gt;2)-alpha-D-Man-(1-&gt;6)]-beta-D-Man-(1-&gt;4)-beta-D-GlcNAc-(1-&gt;4)-beta-D-GlcNAc}-L-asparaginyl-[protein] + UDP + H(+). The protein operates within protein modification; protein glycosylation. Its function is as follows. Glycosyltransferase that participates in the transfer of N-acetylglucosamine (GlcNAc) to the core mannose residues of N-linked glycans. Catalyzes the formation of the GlcNAcbeta1-4 branch on the GlcNAcbeta1-2Manalpha1-3 arm of the core structure of N-linked glycans. Essential for the production of tri- and tetra-antennary N-linked sugar chains. Does not catalyze the transfer of GlcNAc to the Manalpha1-6 arm to form GlcNAcBeta1-4Manalpha1-6 linkage ('GnT-VI' activity). The polypeptide is Alpha-1,3-mannosyl-glycoprotein 4-beta-N-acetylglucosaminyltransferase C (MGAT4C) (Sus scrofa (Pig)).